A 529-amino-acid chain; its full sequence is Type I restriction enzyme StySJI methylase subunit (529 aa).

Residues 148-153, 178-180, and Glu216 each bind S-adenosyl-L-methionine; these read QYFTPR and TAG. The tract at residues 405–444 is disordered; the sequence is YGEDPHGLSPREEGEWSFNAEESEVADSEENKNTDQHQAT. The segment covering 407-418 has biased composition (basic and acidic residues); it reads EDPHGLSPREEG.

This sequence belongs to the N(4)/N(6)-methyltransferase family. The type I restriction/modification system is composed of three polypeptides R, M and S; the restriction enzyme has stoichiometry R(2)M(2)S(1) while the methyltransferase is M(2)S(1).

It carries out the reaction a 2'-deoxyadenosine in DNA + S-adenosyl-L-methionine = an N(6)-methyl-2'-deoxyadenosine in DNA + S-adenosyl-L-homocysteine + H(+). Its function is as follows. The subtype gamma methyltransferase (M) subunit of a type I restriction enzyme. The M and S subunits together form a methyltransferase (MTase) that methylates two adenine residues of the sequence 5'-GAGN(6)GTRC-3'. In the presence of the R subunit the complex can also act as an endonuclease, binding to the same target sequence but cutting the DNA some distance from this site. Whether the DNA is cut or modified depends on the methylation state of the target sequence. When the target site is unmodified, the DNA is cut. When the target site is hemimethylated, the complex acts as a maintenance MTase modifying the DNA so that both strands become methylated. After locating a non-methylated recognition site, the enzyme complex serves as a molecular motor that translocates DNA in an ATP-dependent manner until a collision occurs that triggers cleavage. The chain is Type I restriction enzyme StySJI methylase subunit from Salmonella typhimurium (strain LT2 / SGSC1412 / ATCC 700720).